The sequence spans 434 residues: Transcriptional enhancer factor TEF-3 (434 aa).

Polar residues predominate over residues 1–28 (MEGTAGTITSNEWSSPTSPEGSTASGGS). 2 disordered regions span residues 1–42 (MEGT…AEGV) and 188–215 (QPPLPLPGFESPAGPAPSPSAPPAPPWQ). Residues 36–112 (DNDAEGVWSP…QVLARRKARE (77 aa)) constitute a DNA-binding region (TEA). The span at 201–213 (GPAPSPSAPPAPP) shows a compositional bias: pro residues.

As to quaternary structure, interacts with YAP1 and WWTR1/TAZ. In terms of tissue distribution, preferentially expressed in skeletal muscle. Lower levels in pancreas, placenta, and heart.

The protein resides in the nucleus. Functionally, transcription factor which plays a key role in the Hippo signaling pathway, a pathway involved in organ size control and tumor suppression by restricting proliferation and promoting apoptosis. The core of this pathway is composed of a kinase cascade wherein MST1/MST2, in complex with its regulatory protein SAV1, phosphorylates and activates LATS1/2 in complex with its regulatory protein MOB1, which in turn phosphorylates and inactivates YAP1 oncoprotein and WWTR1/TAZ. Acts by mediating gene expression of YAP1 and WWTR1/TAZ, thereby regulating cell proliferation, migration and epithelial mesenchymal transition (EMT) induction. Binds specifically and non-cooperatively to the Sph and GT-IIC 'enhansons' (5'-GTGGAATGT-3') and activates transcription. Binds to the M-CAT motif. The polypeptide is Transcriptional enhancer factor TEF-3 (TEAD4) (Homo sapiens (Human)).